The primary structure comprises 182 residues: Methyl-CpG-binding domain-containing protein 5 (182 aa).

Disordered regions lie at residues 1–56 (MSNG…GTVD) and 80–126 (HGTP…KPLN). The MBD domain maps to 25-101 (KRATPGDDNW…ENGDSHSEHS (77 aa)). Positions 92-105 (ENGDSHSEHSEGRG) are enriched in basic and acidic residues. A compositionally biased stretch (basic residues) spans 106 to 115 (SARRQTKSNK).

In terms of assembly, homodimer and heterodimer with MBD6. Interacts with DDM1 via its MBD domain. As to expression, mostly expressed in flowers, and, to a lower extent, in seedlings, buds, stems and mature seeds, but barely in roots, exclusively in root meristem cells at tips (at protein level).

The protein localises to the nucleus. Its subcellular location is the chromosome. Functionally, transcriptional regulator that binds CpG islands in promoters where the DNA is methylated at position 5 of cytosine within CpG dinucleotides. In addition, binds specifically methylated m(5)CpNpN but not m(5)CpNpG (N is A, T or C). Plays probably a role in gene silencing. This is Methyl-CpG-binding domain-containing protein 5 (MBD5) from Arabidopsis thaliana (Mouse-ear cress).